A 282-amino-acid polypeptide reads, in one-letter code: Probable phosphatase C1620.13 (282 aa).

Residue histidine 61 is the Tele-phosphohistidine intermediate of the active site. Glutamate 135 serves as the catalytic Proton donor/acceptor.

The protein belongs to the phosphoglycerate mutase family. BPG-dependent PGAM subfamily.

It is found in the nucleus. The sequence is that of Probable phosphatase C1620.13 from Schizosaccharomyces pombe (strain 972 / ATCC 24843) (Fission yeast).